We begin with the raw amino-acid sequence, 420 residues long: ATP phosphoribosyltransferase regulatory subunit (420 aa).

Belongs to the class-II aminoacyl-tRNA synthetase family. HisZ subfamily. As to quaternary structure, heteromultimer composed of HisG and HisZ subunits.

It is found in the cytoplasm. Its pathway is amino-acid biosynthesis; L-histidine biosynthesis; L-histidine from 5-phospho-alpha-D-ribose 1-diphosphate: step 1/9. Required for the first step of histidine biosynthesis. May allow the feedback regulation of ATP phosphoribosyltransferase activity by histidine. This is ATP phosphoribosyltransferase regulatory subunit from Bacillus thuringiensis (strain Al Hakam).